A 396-amino-acid polypeptide reads, in one-letter code: NADH-quinone oxidoreductase subunit D (396 aa).

This sequence belongs to the complex I 49 kDa subunit family. In terms of assembly, NDH-1 is composed of 14 different subunits. Subunits NuoB, C, D, E, F, and G constitute the peripheral sector of the complex.

Its subcellular location is the cell inner membrane. The catalysed reaction is a quinone + NADH + 5 H(+)(in) = a quinol + NAD(+) + 4 H(+)(out). In terms of biological role, NDH-1 shuttles electrons from NADH, via FMN and iron-sulfur (Fe-S) centers, to quinones in the respiratory chain. The immediate electron acceptor for the enzyme in this species is believed to be ubiquinone. Couples the redox reaction to proton translocation (for every two electrons transferred, four hydrogen ions are translocated across the cytoplasmic membrane), and thus conserves the redox energy in a proton gradient. The chain is NADH-quinone oxidoreductase subunit D from Brucella abortus (strain S19).